We begin with the raw amino-acid sequence, 119 residues long: Phosphoribosyl-AMP cyclohydrolase (119 aa).

Position 77 (D77) interacts with Mg(2+). C78 contacts Zn(2+). Positions 79 and 81 each coordinate Mg(2+). The Zn(2+) site is built by C94 and C101.

Belongs to the PRA-CH family. In terms of assembly, homodimer. It depends on Mg(2+) as a cofactor. The cofactor is Zn(2+).

It localises to the cytoplasm. It carries out the reaction 1-(5-phospho-beta-D-ribosyl)-5'-AMP + H2O = 1-(5-phospho-beta-D-ribosyl)-5-[(5-phospho-beta-D-ribosylamino)methylideneamino]imidazole-4-carboxamide. The protein operates within amino-acid biosynthesis; L-histidine biosynthesis; L-histidine from 5-phospho-alpha-D-ribose 1-diphosphate: step 3/9. Functionally, catalyzes the hydrolysis of the adenine ring of phosphoribosyl-AMP. This is Phosphoribosyl-AMP cyclohydrolase from Dinoroseobacter shibae (strain DSM 16493 / NCIMB 14021 / DFL 12).